Here is a 189-residue protein sequence, read N- to C-terminus: Interferon alpha-21 (189 aa).

A signal peptide spans 1-23; it reads MALSFSLLMAVLVLSYKSICSLG. 2 disulfides stabilise this stretch: cysteine 24–cysteine 122 and cysteine 52–cysteine 162.

It belongs to the alpha/beta interferon family.

It localises to the secreted. Produced by macrophages, IFN-alpha have antiviral activities. Interferon stimulates the production of two enzymes: a protein kinase and an oligoadenylate synthetase. The chain is Interferon alpha-21 (IFNA21) from Homo sapiens (Human).